The following is an 850-amino-acid chain: MIRRLLIPNAAAKSHQYIKVSLFSTSAPEITPPFIHKCKTISQVKLIHQKLLSFGILTLNLTSHLISTYISVGCLSHAVSLLRRFPPSDAGVYHWNSLIRSYGDNGCANKCLYLFGLMHSLSWTPDNYTFPFVFKACGEISSVRCGESAHALSLVTGFISNVFVGNALVAMYSRCRSLSDARKVFDEMSVWDVVSWNSIIESYAKLGKPKVALEMFSRMTNEFGCRPDNITLVNVLPPCASLGTHSLGKQLHCFAVTSEMIQNMFVGNCLVDMYAKCGMMDEANTVFSNMSVKDVVSWNAMVAGYSQIGRFEDAVRLFEKMQEEKIKMDVVTWSAAISGYAQRGLGYEALGVCRQMLSSGIKPNEVTLISVLSGCASVGALMHGKEIHCYAIKYPIDLRKNGHGDENMVINQLIDMYAKCKKVDTARAMFDSLSPKERDVVTWTVMIGGYSQHGDANKALELLSEMFEEDCQTRPNAFTISCALVACASLAALRIGKQIHAYALRNQQNAVPLFVSNCLIDMYAKCGSISDARLVFDNMMAKNEVTWTSLMTGYGMHGYGEEALGIFDEMRRIGFKLDGVTLLVVLYACSHSGMIDQGMEYFNRMKTVFGVSPGPEHYACLVDLLGRAGRLNAALRLIEEMPMEPPPVVWVAFLSCCRIHGKVELGEYAAEKITELASNHDGSYTLLSNLYANAGRWKDVTRIRSLMRHKGVKKRPGCSWVEGIKGTTTFFVGDKTHPHAKEIYQVLLDHMQRIKDIGYVPETGFALHDVDDEEKDDLLFEHSEKLALAYGILTTPQGAAIRITKNLRVCGDCHTAFTYMSRIIDHDIILRDSSRFHHFKNGSCSCKGYW.

17 PPR repeats span residues 58–88 (TLNL…FPPS), 91–125 (GVYH…SWTP), 126–160 (DNYT…GFIS), 161–191 (NVFV…MSVW), 192–227 (DVVS…GCRP), 228–262 (DNIT…EMIQ), 263–293 (NMFV…MSVK), 294–328 (DVVS…KIKM), 329–363 (DVVT…GIKP), 364–398 (NEVT…PIDL), 406–436 (ENMV…LSPK), 439–473 (DVVT…DCQT), 476–510 (NAFT…QQNA), 512–542 (PLFV…MMAK), 543–577 (NEVT…GFKL), 578–608 (DGVT…MKTV), and 614–644 (GPEH…MPME). Residues 649-724 (VWVAFLSCCR…RPGCSWVEGI (76 aa)) are type E motif. The tract at residues 725 to 755 (KGTTTFFVGDKTHPHAKEIYQVLLDHMQRIK) is type E(+) motif. The type DYW motif stretch occupies residues 756–850 (DIGYVPETGF…NGSCSCKGYW (95 aa)).

Belongs to the PPR family. PCMP-H subfamily.

The sequence is that of Pentatricopeptide repeat-containing protein At5g16860 (PCMP-H92) from Arabidopsis thaliana (Mouse-ear cress).